The primary structure comprises 292 residues: UPF0696 protein C11orf68 homolog (292 aa).

The segment covering 1–10 (MAAAAAAVAG) has biased composition (low complexity). The segment at 1–60 (MAAAAAAVAGAGRGGGGGADPGQERSRARSWVGAERSEGRRMEPNEELEEEDSPGGREDG) is disordered. Positions 11–20 (AGRGGGGGAD) are enriched in gly residues. Positions 35–44 (ERSEGRRMEP) are enriched in basic and acidic residues.

This sequence belongs to the UPF0696 family.

The protein is UPF0696 protein C11orf68 homolog (Bles03) of Rattus norvegicus (Rat).